A 460-amino-acid chain; its full sequence is UDP-glycosyltransferase 74B1 (460 aa).

His22 functions as the Proton acceptor in the catalytic mechanism. Residue His22 participates in an anthocyanidin binding. Asp113 functions as the Charge relay in the catalytic mechanism. Positions 135, 339, 354, 357, 358, 359, 362, 378, and 379 each coordinate UDP-alpha-D-glucose.

The protein belongs to the UDP-glycosyltransferase family. Expressed in the vasculature, the apical meristems of roots, shoots and inflorescence, and the junction of organ or branches.

The catalysed reaction is (Z)-2-phenyl-1-thioacetohydroximate + UDP-alpha-D-glucose = (Z)-desulfoglucotropeolin + UDP. It catalyses the reaction a (Z)-omega-(methylsulfanyl)alkyl-thiohydroximate + UDP-alpha-D-glucose = an aliphatic (Z)-desulfo-glucosinolate + UDP. The enzyme catalyses (Z)-2-(indol-3-yl)-1-thioacetohydroximate + UDP-alpha-D-glucose = (Z)-indolylmethyl desulfoglucosinolate + UDP. Its function is as follows. Involved in the biosynthesis of glucosinolate. In in vitro assay, may use phenylacetothiohydroximate (PATH), but not phenylacetic acid (PAA), indole-3-acetic acid (IAA) or salicylic acid (SA) as substrate. Specific for the thiohydroximate functional group and does not glucosylate the carboxylate group or a hydroxyl group. The chain is UDP-glycosyltransferase 74B1 (UGT74B1) from Arabidopsis thaliana (Mouse-ear cress).